The primary structure comprises 88 residues: MAHKKGTGSTRNGRDSNSKRLGVKAFGGESVTAGSILIRQRGTSVLPGVNVGKGKDDTLFALTDGFVKFESIKRGLRNRKRINITAAV.

The tract at residues 1 to 23 is disordered; the sequence is MAHKKGTGSTRNGRDSNSKRLGV.

It belongs to the bacterial ribosomal protein bL27 family.

The protein is Large ribosomal subunit protein bL27 of Synechococcus sp. (strain CC9902).